The following is a 368-amino-acid chain: tRNA(Met) cytidine acetate ligase (368 aa).

ATP contacts are provided by residues 7–20 (IAEF…HKYL), glycine 96, asparagine 152, and arginine 175.

Belongs to the TmcAL family.

The protein localises to the cytoplasm. It carries out the reaction cytidine(34) in elongator tRNA(Met) + acetate + ATP = N(4)-acetylcytidine(34) in elongator tRNA(Met) + AMP + diphosphate. Its function is as follows. Catalyzes the formation of N(4)-acetylcytidine (ac(4)C) at the wobble position of elongator tRNA(Met), using acetate and ATP as substrates. First activates an acetate ion to form acetyladenylate (Ac-AMP) and then transfers the acetyl group to tRNA to form ac(4)C34. The protein is tRNA(Met) cytidine acetate ligase of Streptococcus pyogenes serotype M28 (strain MGAS6180).